We begin with the raw amino-acid sequence, 422 residues long: Serpin A11 (422 aa).

The signal sequence occupies residues 1–24 (MGPVWLWLLIAELLLPVHYQPSSA). The interval 25 to 45 (HGDKSLGAPQPASHQSLEPAP) is disordered. N-linked (GlcNAc...) asparagine glycans are attached at residues N106, N169, N350, and N385.

The protein belongs to the serpin family.

It is found in the secreted. In Rattus norvegicus (Rat), this protein is Serpin A11 (Serpina11).